Reading from the N-terminus, the 646-residue chain is Threonine--tRNA ligase (646 aa).

The TGS domain occupies 1–63; it reads MADLSIIFPD…SSGGSIEIIT (63 aa). Residues 244–541 are catalytic; sequence DHRKLGKELG…LIEEYKGAFP (298 aa). Zn(2+)-binding residues include C337, H388, and H518.

It belongs to the class-II aminoacyl-tRNA synthetase family. Homodimer. Zn(2+) is required as a cofactor.

The protein resides in the cytoplasm. The enzyme catalyses tRNA(Thr) + L-threonine + ATP = L-threonyl-tRNA(Thr) + AMP + diphosphate + H(+). Its function is as follows. Catalyzes the attachment of threonine to tRNA(Thr) in a two-step reaction: L-threonine is first activated by ATP to form Thr-AMP and then transferred to the acceptor end of tRNA(Thr). Also edits incorrectly charged L-seryl-tRNA(Thr). In Oceanobacillus iheyensis (strain DSM 14371 / CIP 107618 / JCM 11309 / KCTC 3954 / HTE831), this protein is Threonine--tRNA ligase.